The following is an 801-amino-acid chain: Lon protease 2 (801 aa).

One can recognise a Lon N-terminal domain in the interval 14–209 (LPMLPVRDIV…LVNEILAAEL (196 aa)). Position 361–368 (361–368 (GPPGVGKT)) interacts with ATP. Residues 597–778 (DSQVGVVQGL…DEVFAVAFDK (182 aa)) enclose the Lon proteolytic domain. Catalysis depends on residues Ser-684 and Lys-727. The span at 780–791 (AKGQEKKPAAKK) shows a compositional bias: basic and acidic residues. The segment at 780 to 801 (AKGQEKKPAAKKDPKKTKSLAA) is disordered. A compositionally biased stretch (basic residues) spans 792 to 801 (DPKKTKSLAA).

The protein belongs to the peptidase S16 family. Homohexamer. Organized in a ring with a central cavity.

It is found in the cytoplasm. The catalysed reaction is Hydrolysis of proteins in presence of ATP.. In terms of biological role, ATP-dependent serine protease that mediates the selective degradation of mutant and abnormal proteins as well as certain short-lived regulatory proteins. Required for cellular homeostasis and for survival from DNA damage and developmental changes induced by stress. Degrades polypeptides processively to yield small peptide fragments that are 5 to 10 amino acids long. Binds to DNA in a double-stranded, site-specific manner. The sequence is that of Lon protease 2 from Bdellovibrio bacteriovorus (strain ATCC 15356 / DSM 50701 / NCIMB 9529 / HD100).